Here is a 667-residue protein sequence, read N- to C-terminus: Primary amine oxidase (667 aa).

An N-terminal signal peptide occupies residues 1 to 18 (KFALFSVLTLLSFHAVFS). Residue Asn149 is glycosylated (N-linked (GlcNAc...) asparagine). Cys155 and Cys176 are joined by a disulfide. Positions 216-246 (PTAENTEYQVSKQSPPFGPKQHSLTSHQPQG) are disordered. Residues 218-229 (AENTEYQVSKQS) are compositionally biased toward polar residues. Asn252 is a glycosylation site (N-linked (GlcNAc...) asparagine). Residue 316 to 327 (FFDSGEFGFGLS) coordinates substrate. The active-site Proton acceptor is the Asp318. The cysteines at positions 337 and 363 are disulfide-linked. N-linked (GlcNAc...) asparagine glycosylation occurs at Asn382. Position 402–407 (402–407 (VGNYDN)) interacts with substrate. Tyr405 serves as the catalytic Schiff-base intermediate with substrate; via topaquinone. Tyr405 carries the 2',4',5'-topaquinone modification. Cu cation-binding residues include His460 and His462. Residues Asp469, Phe470, and Asp471 each contribute to the Mn(2+) site. Asn576 is a glycosylation site (N-linked (GlcNAc...) asparagine). Mn(2+) contacts are provided by Asp610 and Ile611. Residue His621 participates in Cu cation binding.

The protein belongs to the copper/topaquinone oxidase family. In terms of assembly, homodimer. It depends on Cu cation as a cofactor. The cofactor is Zn(2+). L-topaquinone serves as cofactor. Requires Mn(2+) as cofactor. Glycosylated; contains two carbohydrate chains per monomer. Post-translationally, topaquinone (TPQ) is generated by copper-dependent autoxidation of a specific tyrosyl residue.

It catalyses the reaction a primary methyl amine + O2 + H2O = an aldehyde + H2O2 + NH4(+). The chain is Primary amine oxidase from Lens culinaris (Lentil).